The following is a 308-amino-acid chain: MSFAFSKVEFEEVEFQTLDKLTLKARLYSAAKRGPALVMNPGYNCTKEISAPSAAAYFQSKGITCLIYDPRNCGQSDGTPRREIDPHRQVDDYLDAMTYMSGLDIVDPDQIGFWGVSFSASIALAAACYDPRAKCIITVSPWTFDFGITAAEAKDNFSRLVAEREAQALGNEPFYTAMVDEEGNNPIHVNVDWGDEVRAAVNEFVSLSADGFVPTVTFQSYYKLFTFSPYLSLKFLGDTPLMMVVPEHDTVCPVEQQVKLYDAVEGPKEIYHAEGKRHLNMLAEDKFFEPMMKPQVEFFFKVMRGEAI.

Residues 35–159 (PALVMNPGYN…AAEAKDNFSR (125 aa)) enclose the AB hydrolase-1 domain.

The protein belongs to the polyketide transferase af380 family.

It functions in the pathway secondary metabolite biosynthesis; terpenoid biosynthesis. Its function is as follows. Acyltransferase; part of the gene cluster that mediates the biosynthesis of various drimane-type sesquiterpene esters, compounds that exhibit diverse biological activities and are widely present in eukaryotes. The pathway begins with the synthesis of the backbone drimenol by the terpene cyclase drtB using farnesyl pyrophosphate (FPP) as substrate. The cytochrome P450 monooxygenase drtD is then responsible for the hydroxylations at C-6, C-9 and C-12, as well as the oxidation of hydroxyl groups at C-6 and C-11 to a ketone and an aldehyde, respectively. Then, the biosynthesis can go in two directions, either the hydroxylated drimenol is further hydroxylated at C-2 and C-3 by an enzyme(s) not associated with the drt cluster, or the FAD-binding oxidoreductase drtC further oxidizes C-11 or C-12 to form the butyrolactone ring. DrtB, drtD and drtC are solely responsible for the formation of the different drimane structures observed during drimane sesquiterpenes biosynthesis. The polyketide synthase drtA synthesizes different lengths (C6 and C8) of PKS chains, which are then oxidized to varying degrees by the short-chain dehydrogenase drtF. Finally, these PKS chains are transferred onto drimane sesquiterpenes by the acyltransferase drtE, forming the sesquiterpene esters. In addition to the different fatty acyl-CoA chains produced by drtA, drtE is also able to use cinnamoyl-CoA as a substrate. The sequence is that of Acyltransferase drtE from Aspergillus calidoustus.